Consider the following 297-residue polypeptide: MPELPEVETVRRGLEPALVGARFTTVHLARPDLRFPLPARFAARLTGQRVEALSRRAKYLVADLSSGDALIMHLGMSGRFDVVFPDGRQLSPGEFYLEGAPGQAKHDHVVFALSNGARVTYNDVRRFGFMDLVRRAELETCRHFAGMGIEPLGSDLSGEAVARLFRGRRTPLKAALLDQRLIAGLGNIYVCEALHRARLHPEAAAGTLADAAGRPTRAAARLAQVIRDVLTEAVAAGGSTLRDYAHTDGTQGAFQHRFRVYDREGLACTARGCRGRVRRIVQAGRSTFYCETCQPAP.

The Schiff-base intermediate with DNA role is filled by P2. Catalysis depends on E3, which acts as the Proton donor. K58 functions as the Proton donor; for beta-elimination activity in the catalytic mechanism. DNA contacts are provided by H106, R125, and R168. Residues 259 to 295 (RVYDREGLACTARGCRGRVRRIVQAGRSTFYCETCQP) form an FPG-type zinc finger. R285 serves as the catalytic Proton donor; for delta-elimination activity.

It belongs to the FPG family. In terms of assembly, monomer. Zn(2+) serves as cofactor.

The catalysed reaction is Hydrolysis of DNA containing ring-opened 7-methylguanine residues, releasing 2,6-diamino-4-hydroxy-5-(N-methyl)formamidopyrimidine.. It carries out the reaction 2'-deoxyribonucleotide-(2'-deoxyribose 5'-phosphate)-2'-deoxyribonucleotide-DNA = a 3'-end 2'-deoxyribonucleotide-(2,3-dehydro-2,3-deoxyribose 5'-phosphate)-DNA + a 5'-end 5'-phospho-2'-deoxyribonucleoside-DNA + H(+). Its function is as follows. Involved in base excision repair of DNA damaged by oxidation or by mutagenic agents. Acts as a DNA glycosylase that recognizes and removes damaged bases. Has a preference for oxidized purines, such as 7,8-dihydro-8-oxoguanine (8-oxoG). Has AP (apurinic/apyrimidinic) lyase activity and introduces nicks in the DNA strand. Cleaves the DNA backbone by beta-delta elimination to generate a single-strand break at the site of the removed base with both 3'- and 5'-phosphates. The chain is Formamidopyrimidine-DNA glycosylase from Methylobacterium sp. (strain 4-46).